The sequence spans 390 residues: S-adenosylmethionine synthase 2 (390 aa).

Residue glutamate 9 coordinates Mg(2+). Histidine 15 contacts ATP. A K(+)-binding site is contributed by glutamate 43. L-methionine is bound by residues glutamate 56 and glutamine 99. Residues 167–169 (DGK), 235–238 (SGRF), aspartate 246, 252–253 (RK), alanine 269, lysine 273, and lysine 277 each bind ATP. Aspartate 246 contributes to the L-methionine binding site. Lysine 277 serves as a coordination point for L-methionine.

The protein belongs to the AdoMet synthase family. As to quaternary structure, homotetramer. Mn(2+) serves as cofactor. Mg(2+) is required as a cofactor. Requires Co(2+) as cofactor. It depends on K(+) as a cofactor.

It localises to the cytoplasm. It catalyses the reaction L-methionine + ATP + H2O = S-adenosyl-L-methionine + phosphate + diphosphate. The protein operates within amino-acid biosynthesis; S-adenosyl-L-methionine biosynthesis; S-adenosyl-L-methionine from L-methionine: step 1/1. In terms of biological role, catalyzes the formation of S-adenosylmethionine from methionine and ATP. The reaction comprises two steps that are both catalyzed by the same enzyme: formation of S-adenosylmethionine (AdoMet) and triphosphate, and subsequent hydrolysis of the triphosphate. The chain is S-adenosylmethionine synthase 2 (SAM2) from Actinidia chinensis var. chinensis (Chinese soft-hair kiwi).